Consider the following 192-residue polypeptide: Nucleoside triphosphate pyrophosphatase (192 aa).

Residue Asp-73 is the Proton acceptor of the active site.

It belongs to the Maf family. A divalent metal cation is required as a cofactor.

The protein resides in the cytoplasm. The catalysed reaction is a ribonucleoside 5'-triphosphate + H2O = a ribonucleoside 5'-phosphate + diphosphate + H(+). The enzyme catalyses a 2'-deoxyribonucleoside 5'-triphosphate + H2O = a 2'-deoxyribonucleoside 5'-phosphate + diphosphate + H(+). Nucleoside triphosphate pyrophosphatase. May have a dual role in cell division arrest and in preventing the incorporation of modified nucleotides into cellular nucleic acids. The protein is Nucleoside triphosphate pyrophosphatase of Ehrlichia canis (strain Jake).